The sequence spans 163 residues: Nucleotide-binding protein YajQ (163 aa).

It belongs to the YajQ family.

Nucleotide-binding protein. This chain is Nucleotide-binding protein YajQ, found in Escherichia coli O81 (strain ED1a).